Consider the following 107-residue polypeptide: MMTTAKTFAEFKTLTDTEDYLQFFGIAYDQGFVNVNRLHILKQFSKLIEEVDAAFPTLSETEKLEKYGQAFEEAYELFKTSSPLETKLFKVFQEKPKDVVFLKDLTK.

The protein belongs to the NifW family. Homotrimer; associates with NifD.

In terms of biological role, may protect the nitrogenase Fe-Mo protein from oxidative damage. The sequence is that of Nitrogenase-stabilizing/protective protein NifW from Gloeothece citriformis (strain PCC 7424) (Cyanothece sp. (strain PCC 7424)).